The sequence spans 254 residues: Ribosomal RNA small subunit methyltransferase G (254 aa).

S-adenosyl-L-methionine is bound by residues glycine 84, phenylalanine 89, 136–137 (VE), and arginine 155. The interval 231 to 254 (HLYPRAVGIPSKQPLGIQADDNRS) is disordered.

The protein belongs to the methyltransferase superfamily. RNA methyltransferase RsmG family.

It is found in the cytoplasm. Specifically methylates the N7 position of a guanine in 16S rRNA. In Synechococcus sp. (strain WH7803), this protein is Ribosomal RNA small subunit methyltransferase G.